Here is a 194-residue protein sequence, read N- to C-terminus: MSMYNYVKEAWKVPANSYVKELQWSRMQDWRKEPSVIRVERPTRIDRARNLGYKAKQGIVVVRVSVRRGGLRKPRPKHSKKPSTLGINKITMAKSIQRIAEERAAKKYPNLEVLNSYWVGQDGKQKWYEVILVDSCHPSIKSDKSYNWLCKGTHKGRATRGLTSAGKKGRGLMYKGKGTEKVRPSVRANSKKAK.

Positions 160–194 are disordered; it reads RGLTSAGKKGRGLMYKGKGTEKVRPSVRANSKKAK.

Belongs to the eukaryotic ribosomal protein eL15 family.

The polypeptide is Large ribosomal subunit protein eL15 (Methanococcus maripaludis (strain C7 / ATCC BAA-1331)).